The following is a 587-amino-acid chain: Xyloglucan-specific endo-beta-1,4-glucanase BoGH9A (587 aa).

The signal sequence occupies residues 1–19 (MKIVRYIALFGILSGLAVA). A lipid anchor (N-palmitoyl cysteine) is attached at C20. C20 carries the S-diacylglycerol cysteine lipid modification. D185 functions as the Nucleophile in the catalytic mechanism. Catalysis depends on residues H511 and D553. The active-site Proton donor is the E562.

Belongs to the glycosyl hydrolase 9 (cellulase E) family.

It localises to the cell outer membrane. It carries out the reaction xyloglucan + H2O = xyloglucan oligosaccharides.. The protein operates within glucan metabolism; xyloglucan degradation. Its function is as follows. Catalyzes endohydrolysis of 1,4-beta-D-glucosidic linkages in xyloglucan with retention of the beta-configuration of the glycosyl residues in xyloglucan degradation. Cleaves the backbone of the 3 major types of natural xyloglucans (seed galactoxyloglucan from tamarind kernel, dicot fucogalactoxyloglucan from lettuce leaves, and solanaceous arabinogalactoxyloglucan from tomato fruit), to produce xyloglucan oligosaccharides. May be superfluous in xyloglucan degradation compared to BoGH5A (AC A7LXT7), the other Xyloglucan-specific endo-beta-1,4-glucanase. The chain is Xyloglucan-specific endo-beta-1,4-glucanase BoGH9A from Bacteroides ovatus (strain ATCC 8483 / DSM 1896 / JCM 5824 / BCRC 10623 / CCUG 4943 / NCTC 11153).